We begin with the raw amino-acid sequence, 341 residues long: Short chain dehydrogenase virL (341 aa).

NADP(+)-binding residues include L49, K74, D97, N123, Y210, and K214. The active-site Proton donor is Y210. K214 (lowers pKa of active site Tyr) is an active-site residue.

It belongs to the short-chain dehydrogenases/reductases (SDR) family.

Its pathway is secondary metabolite biosynthesis. Its function is as follows. Short chain dehydrogenase; part of the gene cluster that mediates the biosynthesis of virensols and trichoxide, fungal natural products that contain or are derived from a salicylaldehyde core. The pathway begins with the synthesis of the reduced chain in virensol C by the highly reducing polyketide synthase virA via condensation of one acetate and 8 malonate units. VirA has interesting programming rules since the first 2 ketides are fully reduced, the 3 following ketides undergo beta-dehydration, and the last 3 ketides are only reduced to beta-hydroxys to yield the trihydroxy portion. The production of aldehyde virensol C by virA alone is surprising, since virA does not contain a reductase (R) domain that is typically associated with reductive product release in HRPKS. The cupin-domain enzyme virC is involved in enhancing virA product turnover. The short-chain dehydrogenase virB then oxidizes the C-7 alcohol of virensol C to a ketone, yielding virensol D. Virensol D is further transformed to salicylaldehyde 5-deoxyaurocitrin by the short-chain dehydrogenase virD. VirD catalyzes the dehydrogenation of C-3 to form the beta-ketone aldehyde, which is followed by the generation of the nucleophilic C-2 that is required for the intramolecular aldol condensation between C-2 and C-7, itself followed by dehydration and aromatization which leads to salicylaldehyde 5-deoxyaurocitrin. While the dehydrogenation of virensol D is definitely catalyzed by virD, the aldol condensation and dehydration may be uncatalyzed or assisted by virD. The short chain dehydrogenase virG then converts salicylaldehyde 5-deoxyaurocitrin into virensol B which is further hydroxylated by the cytochrome P450 monooxygenase virE to yield the hydroquinone virensol A. VirI then may oxidize virensol A to form the quinone, while virH performs the epoxidation. Finally, the two remaining short-chain dehydrogenases, virK and virL, are probably responsible for reducing the ketones to the corresponding alcohols to furnish the epoxycyclohexanol structure in trichoxide. In Hypocrea virens (strain Gv29-8 / FGSC 10586) (Gliocladium virens), this protein is Short chain dehydrogenase virL.